We begin with the raw amino-acid sequence, 952 residues long: Ubiquitin carboxyl-terminal hydrolase 15 (952 aa).

The residue at position 2 (A2) is an N-acetylalanine. Residues 2 to 223 (AEGGAADLDI…KNEDGTWPRG (222 aa)) are mediates interaction with SART3. Residues 7–118 (ADLDIQRSDI…GQEPIARKVV (112 aa)) enclose the DUSP domain. Position 226 is a phosphothreonine (T226). The USP domain maps to 260 to 904 (CGLSNLGNTC…AAYVLFYQRQ (645 aa)). C269 functions as the Nucleophile in the catalytic mechanism. Residue T573 is modified to Phosphothreonine. Residues 598–666 (TEGSLHCCKD…GDNDSENGLC (69 aa)) are disordered. Acidic residues predominate over residues 627–644 (METDEPDDESSQDQELPS). H862 functions as the Proton acceptor in the catalytic mechanism. A disordered region spans residues 923-952 (SAATGIPLESDEDSNDNDNDIENENCMHTN). Residues 931–945 (ESDEDSNDNDNDIEN) show a composition bias toward acidic residues. Phosphoserine is present on residues S932 and S936.

Belongs to the peptidase C19 family. A homodimer structure has been reported; however it is unclear whether the protein form a homodimer in vivo. Identified in a complex with the COP9 signalosome complex (CSN). Interacts with SMAD1, SMAD2 and SMAD3; the interaction is direct. Forms a complex with SMURF2 and SMAD7. Interacts with TGFBR1. Interacts with SART3; the interaction is direct. May interact with RNF20 and RNF40. May interact with PRKN. Interacts with INCA1. Phosphorylated. Phosphorylation protects against ubiquitination and subsequent degradation by the proteasome. In terms of processing, ubiquitinated, leading to degradation by the proteasome.

It is found in the cytoplasm. The protein resides in the nucleus. It localises to the mitochondrion. It carries out the reaction Thiol-dependent hydrolysis of ester, thioester, amide, peptide and isopeptide bonds formed by the C-terminal Gly of ubiquitin (a 76-residue protein attached to proteins as an intracellular targeting signal).. Functionally, hydrolase that removes conjugated ubiquitin from target proteins and regulates various pathways such as the TGF-beta receptor signaling, NF-kappa-B and RNF41/NRDP1-PRKN pathways. Acts as a key regulator of TGF-beta receptor signaling pathway, but the precise mechanism is still unclear: according to a report, acts by promoting deubiquitination of monoubiquitinated R-SMADs (SMAD1, SMAD2 and/or SMAD3), thereby alleviating inhibition of R-SMADs and promoting activation of TGF-beta target genes. According to another reports, regulates the TGF-beta receptor signaling pathway by mediating deubiquitination and stabilization of TGFBR1, leading to an enhanced TGF-beta signal. Able to mediate deubiquitination of monoubiquitinated substrates, 'Lys-27'-, 'Lys-48'- and 'Lys-63'-linked polyubiquitin chains. May also regulate gene expression and/or DNA repair through the deubiquitination of histone H2B. Acts as an inhibitor of mitophagy by counteracting the action of parkin (PRKN): hydrolyzes cleavage of 'Lys-48'- and 'Lys-63'-linked polyubiquitin chains attached by parkin on target proteins such as MFN2, thereby reducing parkin's ability to drive mitophagy. Acts as an associated component of COP9 signalosome complex (CSN) and regulates different pathways via this association: regulates NF-kappa-B by mediating deubiquitination of NFKBIA and deubiquitinates substrates bound to VCP. Involved in endosome organization by mediating deubiquitination of SQSTM1: ubiquitinated SQSTM1 forms a molecular bridge that restrains cognate vesicles in the perinuclear region and its deubiquitination releases target vesicles for fast transport into the cell periphery. Acts as a negative regulator of antifungal immunity by mediating 'Lys-27'-linked deubiquitination of CARD9, thereby inactivating CARD9. The chain is Ubiquitin carboxyl-terminal hydrolase 15 (USP15) from Bos taurus (Bovine).